The chain runs to 406 residues: Aspartokinase (406 aa).

The 65-residue stretch at isoleucine 342–cysteine 406 folds into the ACT domain.

Belongs to the aspartokinase family.

It catalyses the reaction L-aspartate + ATP = 4-phospho-L-aspartate + ADP. It functions in the pathway amino-acid biosynthesis; L-lysine biosynthesis via DAP pathway; (S)-tetrahydrodipicolinate from L-aspartate: step 1/4. It participates in amino-acid biosynthesis; L-methionine biosynthesis via de novo pathway; L-homoserine from L-aspartate: step 1/3. The protein operates within amino-acid biosynthesis; L-threonine biosynthesis; L-threonine from L-aspartate: step 1/5. The sequence is that of Aspartokinase (lysC) from Rickettsia bellii (strain RML369-C).